Consider the following 216-residue polypeptide: Peroxiredoxin (216 aa).

Positions 2 to 158 constitute a Thioredoxin domain; that stretch reads VVIGEKFPEV…ILRLVKALKI (157 aa). The active-site Cysteine sulfenic acid (-SOH) intermediate is C46. A substrate-binding site is contributed by R121. A disulfide bridge connects residues C205 and C211.

This sequence belongs to the peroxiredoxin family. Prx6 subfamily. Homodecamer. Pentamer of dimers that assemble into a ring structure.

The protein resides in the cytoplasm. It catalyses the reaction a hydroperoxide + [thioredoxin]-dithiol = an alcohol + [thioredoxin]-disulfide + H2O. Functionally, thiol-specific peroxidase that catalyzes the reduction of hydrogen peroxide and organic hydroperoxides to water and alcohols, respectively. Plays a role in cell protection against oxidative stress by detoxifying peroxides. In Pyrococcus abyssi (strain GE5 / Orsay), this protein is Peroxiredoxin.